Consider the following 99-residue polypeptide: Putative pterin-4-alpha-carbinolamine dehydratase (99 aa).

It belongs to the pterin-4-alpha-carbinolamine dehydratase family.

The enzyme catalyses (4aS,6R)-4a-hydroxy-L-erythro-5,6,7,8-tetrahydrobiopterin = (6R)-L-erythro-6,7-dihydrobiopterin + H2O. In Bradyrhizobium sp. (strain BTAi1 / ATCC BAA-1182), this protein is Putative pterin-4-alpha-carbinolamine dehydratase.